The following is a 140-amino-acid chain: MRHYEIIFLVHPDQSEQVGGMVERYTKLIEEDGGKIHRLEDWGRRQLAYAINNVHKAHYVMLNVECTGKALAELEDNFRYNDAVIRNLVIRREEAVTGQSEMLKAEENRSERRERRDRPEHEGADSADSDDSDNSDNADE.

A disordered region spans residues 96–140 (VTGQSEMLKAEENRSERRERRDRPEHEGADSADSDDSDNSDNADE). Over residues 103-124 (LKAEENRSERRERRDRPEHEGA) the composition is skewed to basic and acidic residues. The segment covering 125-140 (DSADSDDSDNSDNADE) has biased composition (acidic residues).

This sequence belongs to the bacterial ribosomal protein bS6 family.

Functionally, binds together with bS18 to 16S ribosomal RNA. The polypeptide is Small ribosomal subunit protein bS6 (Pseudomonas fluorescens (strain SBW25)).